The following is a 607-amino-acid chain: Protein NRT1/ PTR FAMILY 1.2 (607 aa).

10 helical membrane-spanning segments follow: residues 65–85 (TNVLFMWSAASNFTPLLGAFL), 96–116 (ISIASLSSFLGMVLLWLTAML), 138–158 (ASQLALLYSAFALISIGSGGI), 185–205 (FFGWYYASSAVAVLIAFTGIV), 215–235 (IGFGVPAVLMLIAALLFILAS), 374–394 (VPAGSFGMFTIIALALWVILY), 418–438 (MGLGLFMSFLAMAISAMVESF), 460–480 (AMWLVPQYVLHGLAEALTAIG), 496–516 (IAASLFGLGMAVASLLASVVL), and 544–564 (YYWVLAIMSFINVIYYVICSW). Residue serine 601 is modified to Phosphoserine.

The protein belongs to the major facilitator superfamily. Proton-dependent oligopeptide transporter (POT/PTR) (TC 2.A.17) family. In terms of tissue distribution, expressed in shoots, stems, leaves, flowers and siliques. Mainly detected in larger expanded leaves, in the companion cells of major veins.

It localises to the cell membrane. Functionally, low-affinity nitrate transporter involved in xylem-to-phloem transfer for redistributing nitrate into developing leaves. Not involved in dipeptides transport. This Arabidopsis thaliana (Mouse-ear cress) protein is Protein NRT1/ PTR FAMILY 1.2 (NPF1.2).